Reading from the N-terminus, the 131-residue chain is Small ribosomal subunit protein uS8 (131 aa).

It belongs to the universal ribosomal protein uS8 family. Part of the 30S ribosomal subunit. Contacts proteins S5 and S12.

In terms of biological role, one of the primary rRNA binding proteins, it binds directly to 16S rRNA central domain where it helps coordinate assembly of the platform of the 30S subunit. This is Small ribosomal subunit protein uS8 from Chlorobium luteolum (strain DSM 273 / BCRC 81028 / 2530) (Pelodictyon luteolum).